We begin with the raw amino-acid sequence, 257 residues long: Thiazole synthase (257 aa).

The active-site Schiff-base intermediate with DXP is the Lys-97. 1-deoxy-D-xylulose 5-phosphate is bound by residues Gly-158, 184–185, and 206–207; these read AG and NT.

Belongs to the ThiG family. In terms of assembly, homotetramer. Forms heterodimers with either ThiH or ThiS.

It is found in the cytoplasm. The enzyme catalyses [ThiS sulfur-carrier protein]-C-terminal-Gly-aminoethanethioate + 2-iminoacetate + 1-deoxy-D-xylulose 5-phosphate = [ThiS sulfur-carrier protein]-C-terminal Gly-Gly + 2-[(2R,5Z)-2-carboxy-4-methylthiazol-5(2H)-ylidene]ethyl phosphate + 2 H2O + H(+). It functions in the pathway cofactor biosynthesis; thiamine diphosphate biosynthesis. Its function is as follows. Catalyzes the rearrangement of 1-deoxy-D-xylulose 5-phosphate (DXP) to produce the thiazole phosphate moiety of thiamine. Sulfur is provided by the thiocarboxylate moiety of the carrier protein ThiS. In vitro, sulfur can be provided by H(2)S. The sequence is that of Thiazole synthase from Phocaeicola vulgatus (strain ATCC 8482 / DSM 1447 / JCM 5826 / CCUG 4940 / NBRC 14291 / NCTC 11154) (Bacteroides vulgatus).